Reading from the N-terminus, the 209-residue chain is Ribonuclease HII (209 aa).

The RNase H type-2 domain occupies 19–209 (CIIVGVDEVG…LPGITKLYSK (191 aa)). Residues aspartate 25, glutamate 26, and aspartate 118 each coordinate a divalent metal cation.

Belongs to the RNase HII family. Requires Mn(2+) as cofactor. It depends on Mg(2+) as a cofactor.

It localises to the cytoplasm. It carries out the reaction Endonucleolytic cleavage to 5'-phosphomonoester.. Functionally, endonuclease that specifically degrades the RNA of RNA-DNA hybrids. This Ehrlichia canis (strain Jake) protein is Ribonuclease HII.